The following is a 107-amino-acid chain: Nucleoid-associated protein mlr5504 (107 aa).

Belongs to the YbaB/EbfC family. As to quaternary structure, homodimer.

It localises to the cytoplasm. The protein localises to the nucleoid. Functionally, binds to DNA and alters its conformation. May be involved in regulation of gene expression, nucleoid organization and DNA protection. The protein is Nucleoid-associated protein mlr5504 of Mesorhizobium japonicum (strain LMG 29417 / CECT 9101 / MAFF 303099) (Mesorhizobium loti (strain MAFF 303099)).